A 439-amino-acid polypeptide reads, in one-letter code: Methylenetetrahydrofolate--tRNA-(uracil-5-)-methyltransferase TrmFO (439 aa).

An FAD-binding site is contributed by 9–14 (GAGLAG).

It belongs to the MnmG family. TrmFO subfamily. Requires FAD as cofactor.

It localises to the cytoplasm. It catalyses the reaction uridine(54) in tRNA + (6R)-5,10-methylene-5,6,7,8-tetrahydrofolate + NADH + H(+) = 5-methyluridine(54) in tRNA + (6S)-5,6,7,8-tetrahydrofolate + NAD(+). It carries out the reaction uridine(54) in tRNA + (6R)-5,10-methylene-5,6,7,8-tetrahydrofolate + NADPH + H(+) = 5-methyluridine(54) in tRNA + (6S)-5,6,7,8-tetrahydrofolate + NADP(+). Functionally, catalyzes the folate-dependent formation of 5-methyl-uridine at position 54 (M-5-U54) in all tRNAs. The chain is Methylenetetrahydrofolate--tRNA-(uracil-5-)-methyltransferase TrmFO from Desulforudis audaxviator (strain MP104C).